A 146-amino-acid polypeptide reads, in one-letter code: Arginine repressor (146 aa).

This sequence belongs to the ArgR family.

It localises to the cytoplasm. It functions in the pathway amino-acid biosynthesis; L-arginine biosynthesis [regulation]. In terms of biological role, regulates arginine biosynthesis genes. The sequence is that of Arginine repressor from Parabacteroides distasonis (strain ATCC 8503 / DSM 20701 / CIP 104284 / JCM 5825 / NCTC 11152).